The primary structure comprises 212 residues: Protein-L-isoaspartate O-methyltransferase (212 aa).

Residue S60 is part of the active site.

This sequence belongs to the methyltransferase superfamily. L-isoaspartyl/D-aspartyl protein methyltransferase family.

The protein resides in the cytoplasm. It catalyses the reaction [protein]-L-isoaspartate + S-adenosyl-L-methionine = [protein]-L-isoaspartate alpha-methyl ester + S-adenosyl-L-homocysteine. Catalyzes the methyl esterification of L-isoaspartyl residues in peptides and proteins that result from spontaneous decomposition of normal L-aspartyl and L-asparaginyl residues. It plays a role in the repair and/or degradation of damaged proteins. The sequence is that of Protein-L-isoaspartate O-methyltransferase from Pseudomonas putida (strain W619).